A 1447-amino-acid polypeptide reads, in one-letter code: Sister chromatid cohesion protein PDS5 homolog B (1447 aa).

One copy of the HEAT repeat lies at 383-419 (LLVNDHLLNFVRERTLDKRWRVRKEAMMGLAQIYKKY). An N6-acetyllysine modification is found at Lys1136. Polar residues predominate over residues 1137–1155 (PLSSAGKQSQTKSSRMETV). The interval 1137-1447 (PLSSAGKQSQ…RRRSSKRERR (311 aa)) is disordered. A phosphoserine mark is found at Ser1140, Ser1162, Ser1166, Ser1176, Ser1182, and Ser1191. The segment covering 1156-1167 (SNASSSSNPSSP) has biased composition (low complexity). The span at 1172–1184 (GRLDSTEMDHSEN) shows a compositional bias: basic and acidic residues. Residues 1196 to 1214 (KKSDKREDSDLVRSELEKP) show a composition bias toward basic and acidic residues. Position 1221 is a phosphoserine (Ser1221). A compositionally biased stretch (basic and acidic residues) spans 1225–1243 (PEEKLGMDDLSKLVQEQKP). Residues 1245–1254 (GSQRGRKRGH) are compositionally biased toward basic residues. The segment at residues 1247 to 1259 (QRGRKRGHAASES) is a DNA-binding region (a.T hook 1). Residues Ser1257 and Ser1259 each carry the phosphoserine modification. A compositionally biased stretch (basic and acidic residues) spans 1265–1274 (PEEKRHKEEL). A Phosphoserine modification is found at Ser1283. Positions 1287–1299 (KGKRGRPPKPLGG) form a DNA-binding region, a.T hook 2. Basic residues-rich tracts occupy residues 1309 to 1318 (TSKKGNKKKP) and 1341 to 1352 (KSKQQRTSKRAQ). Ser1357 and Ser1365 each carry phosphoserine. A compositionally biased stretch (polar residues) spans 1358–1371 (PETSAVESTQSTPQ). The residue at position 1366 (Thr1366) is a Phosphothreonine. Phosphoserine is present on Ser1368. 2 positions are modified to phosphothreonine: Thr1369 and Thr1380. Positions 1371–1383 (QKGRGRPSKTPSP) form a DNA-binding region, a.T hook 3. Residues 1378–1387 (SKTPSPSQPK) show a composition bias toward low complexity. 3 positions are modified to phosphoserine: Ser1382, Ser1416, and Ser1419. The segment covering 1422–1432 (TTQEGAEEEDI) has biased composition (acidic residues). The segment covering 1437–1447 (VRRRSSKRERR) has biased composition (basic residues).

This sequence belongs to the PDS5 family. As to quaternary structure, interacts with the cohesin complex. Interacts with RAD21; the interaction is direct. Interacts with WAPL (via FGF motifs) or CDCA5 (via the FGF motif); the interaction is direct, cohesin-dependent and competitive. In terms of tissue distribution, highly expressed in intact prostate with levels decreasing after castration. Expressed exclusively in prostate cells inhibited from proliferating by long-term androgen exposure.

It localises to the nucleus. Regulator of sister chromatid cohesion in mitosis which may stabilize cohesin complex association with chromatin. May couple sister chromatid cohesion during mitosis to DNA replication. Cohesion ensures that chromosome partitioning is accurate in both meiotic and mitotic cells and plays an important role in DNA repair. Plays a role in androgen-induced proliferative arrest in prostate cells. This chain is Sister chromatid cohesion protein PDS5 homolog B (Pds5b), found in Rattus norvegicus (Rat).